Here is a 323-residue protein sequence, read N- to C-terminus: tRNA dimethylallyltransferase (323 aa).

An ATP-binding site is contributed by 27–34 (GPTGSGKT). Residue 29–34 (TGSGKT) participates in substrate binding. Interaction with substrate tRNA regions lie at residues 52–55 (DSRQ) and 176–180 (QRIVR).

It belongs to the IPP transferase family. In terms of assembly, monomer. The cofactor is Mg(2+).

The enzyme catalyses adenosine(37) in tRNA + dimethylallyl diphosphate = N(6)-dimethylallyladenosine(37) in tRNA + diphosphate. Functionally, catalyzes the transfer of a dimethylallyl group onto the adenine at position 37 in tRNAs that read codons beginning with uridine, leading to the formation of N6-(dimethylallyl)adenosine (i(6)A). This Desulfovibrio desulfuricans (strain ATCC 27774 / DSM 6949 / MB) protein is tRNA dimethylallyltransferase.